An 895-amino-acid polypeptide reads, in one-letter code: Eukaryotic translation initiation factor 3 subunit C (895 aa).

Positions 1-108 (MSGFFRKVGD…DSDSEEEVKK (108 aa)) are disordered. 2 stretches are compositionally biased toward acidic residues: residues 11–31 (SDSE…ESGD) and 52–75 (DDSD…DDDN). The region spanning 638 to 812 (FHMHINLELL…NVVSFHRLEL (175 aa)) is the PCI domain. The span at 838–860 (DAKLGEGKEQRSGAGGERGDREG) shows a compositional bias: basic and acidic residues. The tract at residues 838-895 (DAKLGEGKEQRSGAGGERGDREGGQPGGRRERRGGSAARGRGRGRGRAQQFQALGQKV) is disordered. Low complexity predominate over residues 884-895 (RAQQFQALGQKV).

It belongs to the eIF-3 subunit C family. As to quaternary structure, component of the eukaryotic translation initiation factor 3 (eIF-3) complex.

Its subcellular location is the cytoplasm. Component of the eukaryotic translation initiation factor 3 (eIF-3) complex, which is involved in protein synthesis of a specialized repertoire of mRNAs and, together with other initiation factors, stimulates binding of mRNA and methionyl-tRNAi to the 40S ribosome. The eIF-3 complex specifically targets and initiates translation of a subset of mRNAs involved in cell proliferation. The polypeptide is Eukaryotic translation initiation factor 3 subunit C (Mycosarcoma maydis (Corn smut fungus)).